A 738-amino-acid chain; its full sequence is DNA topoisomerase 4 subunit A (738 aa).

The Topo IIA-type catalytic domain maps to 32 to 496; sequence LPDVRDGLKP…SFEEVDLTNQ (465 aa). Y120 (O-(5'-phospho-DNA)-tyrosine intermediate) is an active-site residue.

Belongs to the type II topoisomerase GyrA/ParC subunit family. ParC type 1 subfamily. Heterotetramer composed of ParC and ParE.

The protein localises to the cell membrane. The catalysed reaction is ATP-dependent breakage, passage and rejoining of double-stranded DNA.. Functionally, topoisomerase IV is essential for chromosome segregation. It relaxes supercoiled DNA. Performs the decatenation events required during the replication of a circular DNA molecule. The chain is DNA topoisomerase 4 subunit A from Rickettsia prowazekii (strain Madrid E).